A 158-amino-acid chain; its full sequence is UPF0178 protein Rpal_2485 (158 aa).

It belongs to the UPF0178 family.

The sequence is that of UPF0178 protein Rpal_2485 from Rhodopseudomonas palustris (strain TIE-1).